A 319-amino-acid polypeptide reads, in one-letter code: ATP-dependent 6-phosphofructokinase (319 aa).

Gly-11 is an ATP binding site. 21-25 (RAVVR) contacts ADP. Residues 72–73 (RC) and 102–105 (GDGS) contribute to the ATP site. Residue Asp-103 coordinates Mg(2+). 125–127 (TID) contacts substrate. The active-site Proton acceptor is Asp-127. Arg-154 contributes to the ADP binding site. Substrate is bound by residues Arg-162 and 169 to 171 (MGR). ADP contacts are provided by residues 185–187 (GAE), Arg-211, and 213–215 (KLH). Substrate-binding positions include Glu-222, Arg-243, and 249 to 252 (HLQR).

The protein belongs to the phosphofructokinase type A (PFKA) family. ATP-dependent PFK group I subfamily. Prokaryotic clade 'B1' sub-subfamily. As to quaternary structure, homotetramer. Mg(2+) serves as cofactor.

The protein resides in the cytoplasm. The enzyme catalyses beta-D-fructose 6-phosphate + ATP = beta-D-fructose 1,6-bisphosphate + ADP + H(+). It functions in the pathway carbohydrate degradation; glycolysis; D-glyceraldehyde 3-phosphate and glycerone phosphate from D-glucose: step 3/4. With respect to regulation, allosterically activated by ADP and other diphosphonucleosides, and allosterically inhibited by phosphoenolpyruvate. Functionally, catalyzes the phosphorylation of D-fructose 6-phosphate to fructose 1,6-bisphosphate by ATP, the first committing step of glycolysis. The polypeptide is ATP-dependent 6-phosphofructokinase (Clostridium novyi (strain NT)).